The following is a 367-amino-acid chain: Alanine racemase (367 aa).

Lys-40 acts as the Proton acceptor; specific for D-alanine in catalysis. Lys-40 is subject to N6-(pyridoxal phosphate)lysine. Substrate is bound at residue Arg-136. The active-site Proton acceptor; specific for L-alanine is the Tyr-263. Met-310 contributes to the substrate binding site.

Belongs to the alanine racemase family. Requires pyridoxal 5'-phosphate as cofactor.

It catalyses the reaction L-alanine = D-alanine. Its pathway is amino-acid biosynthesis; D-alanine biosynthesis; D-alanine from L-alanine: step 1/1. Catalyzes the interconversion of L-alanine and D-alanine. May also act on other amino acids. The protein is Alanine racemase (alr) of Streptococcus pneumoniae (strain Taiwan19F-14).